A 196-amino-acid chain; its full sequence is Pantothenic acid transporter PanT (196 aa).

Transmembrane regions (helical) follow at residues 10–30 (AILA…QFVI), 35–55 (FPVK…ILGW), 58–78 (GAFL…IVTT), 99–119 (WGLF…YFVY), 131–151 (AAFA…FLFF), and 161–181 (YLLG…AVIL).

In terms of assembly, in E.coli forms a stable energy-coupling factor (ECF) transporter complex composed of 2 membrane-embedded substrate-binding protein (S component), 2 ATP-binding proteins (A and A' components) and 2 transmembrane proteins (T component), probably with a stoichiometry of 2:1:1:2. May be able to interact with more than 1 S component at a time.

It is found in the cell membrane. Functionally, probably a pantothenic acid-binding protein that interacts with the energy-coupling factor (ECF) ABC-transporter complex. Unlike classic ABC transporters this ECF transporter provides the energy necessary to transport a number of different substrates. The substrates themselves are bound by transmembrane, not extracytoplasmic soluble proteins. The protein is Pantothenic acid transporter PanT (panT) of Lactococcus lactis subsp. cremoris (strain MG1363).